Reading from the N-terminus, the 357-residue chain is D-alanine--D-alanine ligase (357 aa).

In terms of domain architecture, ATP-grasp spans 134–339; the sequence is KQLFEHRGLP…YPDLIAKLID (206 aa). Position 167-222 (167-222) interacts with ATP; the sequence is NDKLTYPVFVKPANLGSSVGISKCNNEEELKSGITEAFQFDRKLVIEQGINAREIE. Residues Asp-293, Glu-306, and Asn-308 each contribute to the Mg(2+) site.

Belongs to the D-alanine--D-alanine ligase family. Requires Mg(2+) as cofactor. Mn(2+) serves as cofactor.

The protein resides in the cytoplasm. The catalysed reaction is 2 D-alanine + ATP = D-alanyl-D-alanine + ADP + phosphate + H(+). The protein operates within cell wall biogenesis; peptidoglycan biosynthesis. In terms of biological role, cell wall formation. This is D-alanine--D-alanine ligase from Staphylococcus epidermidis (strain ATCC 12228 / FDA PCI 1200).